Here is a 284-residue protein sequence, read N- to C-terminus: Probable palmitoyltransferase ZDHHC24 (284 aa).

The Cytoplasmic segment spans residues 1–18; it reads MGEPWAARGTEGAPARMP. The chain crosses the membrane as a helical span at residues 19–39; sequence VVFTALWAAVVVLELTYVMVL. Over 40–52 the chain is Extracellular; that stretch reads GPGPPPLEPLARA. The chain crosses the membrane as a helical span at residues 53-73; it reads LQLALAAYQLLNLLGNMGLFL. Topologically, residues 74–137 are cytoplasmic; sequence RSDPSIRGVM…GRCVGFHNYR (64 aa). One can recognise a DHHC domain in the interval 94–144; that stretch reads AYCYQCQSQVPPRSGHCSACRVCILRRDHHCRLLGRCVGFHNYRPFLCLLL. C124 serves as the catalytic S-palmitoyl cysteine intermediate. A helical membrane pass occupies residues 138–158; sequence PFLCLLLHAAGVLLHISVLLS. Topologically, residues 159 to 166 are extracellular; that stretch reads PALSALLQ. The helical transmembrane segment at 167–187 threads the bilayer; the sequence is AHSALYTVALLLLPWLMLLTG. The Cytoplasmic portion of the chain corresponds to 188–195; the sequence is KVSLAQFA. Residues 196 to 216 form a helical membrane-spanning segment; the sequence is LAFVVDTCVAGALLCGAGLLF. Residues 217-284 are Extracellular-facing; it reads HGMLLLRGQT…TPTDVGLVTS (68 aa).

It belongs to the DHHC palmitoyltransferase family.

The protein localises to the membrane. The enzyme catalyses L-cysteinyl-[protein] + hexadecanoyl-CoA = S-hexadecanoyl-L-cysteinyl-[protein] + CoA. In terms of biological role, probable palmitoyltransferase that could catalyze the addition of palmitate onto various protein substrates. In Rattus norvegicus (Rat), this protein is Probable palmitoyltransferase ZDHHC24 (Zdhhc24).